Here is a 224-residue protein sequence, read N- to C-terminus: Probable amino-acid permease protein YxeN (224 aa).

Transmembrane regions (helical) follow at residues 3-23, 24-44, 58-78, 91-111, 157-177, and 190-210; these read TIDWEFMISAFPTLIQALPIT, LFMAIAAMIFAIIGGLILALI, LYISFFRGVPTLVQLFLIYYG, ALTAAIIGLSLKNAAYLAEIF, FIGLLKETSLAFTLGVMEMFA, and FETYLAVAIVYWVLTIIYSIL. The ABC transmembrane type-1 domain occupies 20–211; the sequence is LPITLFMAIA…VLTIIYSILQ (192 aa).

The protein belongs to the binding-protein-dependent transport system permease family. In terms of assembly, the complex is composed of two ATP-binding proteins (YxeO), two transmembrane proteins (YxeN) and a solute-binding protein (YxeM).

Its subcellular location is the cell membrane. Functionally, probably part of the ABC transporter complex YxeMNO that could be involved in amino-acid import. May transport S-methylcysteine. Probably responsible for the translocation of the substrate across the membrane. This Bacillus subtilis (strain 168) protein is Probable amino-acid permease protein YxeN (yxeN).